Consider the following 335-residue polypeptide: DNA polymerase beta (335 aa).

Lys41 is covalently cross-linked (Glycyl lysine isopeptide (Lys-Gly) (interchain with G-Cter in ubiquitin)). Residue Lys60 participates in K(+) binding. Residue Lys60 participates in Na(+) binding. Lys61 is covalently cross-linked (Glycyl lysine isopeptide (Lys-Gly) (interchain with G-Cter in ubiquitin)). K(+) contacts are provided by Leu62 and Val65. Residues Leu62 and Val65 each contribute to the Na(+) site. Lys72 acts as the Nucleophile; Schiff-base intermediate with DNA; for 5'-dRP lyase activity in catalysis. Lys72 is modified (N6-acetyllysine). Lys81 participates in a covalent cross-link: Glycyl lysine isopeptide (Lys-Gly) (interchain with G-Cter in ubiquitin). An Omega-N-methylarginine; by PRMT6 modification is found at Arg83. K(+) contacts are provided by Thr101, Val103, and Ile106. The Na(+) site is built by Thr101, Val103, and Ile106. Arg149 lines the a 2'-deoxyribonucleoside 5'-triphosphate pocket. The residue at position 152 (Arg152) is an Omega-N-methylarginine; by PRMT6. Ser180, Arg183, Gly189, and Asp190 together coordinate a 2'-deoxyribonucleoside 5'-triphosphate. A DNA-binding region spans residues 183-192 (RGAESSGDMD). Mg(2+) is bound by residues Asp190, Asp192, and Asp256.

This sequence belongs to the DNA polymerase type-X family. As to quaternary structure, monomer. Binds single-stranded DNA (ssDNA). Interacts with APEX1, LIG1, LIG3, FEN1, PCNA and XRCC1. Interacts with HUWE1/ARF-BP1, STUB1/CHIP and USP47. Interacts with FAM168A. Mg(2+) serves as cofactor. In terms of processing, methylation by PRMT6 stimulates the polymerase activity by enhancing DNA binding and processivity. Ubiquitinated at Lys-41, Lys-61 and Lys-81: monoubiquitinated by HUWE1/ARF-BP1. Monoubiquitinated protein is then the target of STUB1/CHIP, which catalyzes polyubiquitination from monoubiquitin, leading to degradation by the proteasome. USP47 mediates the deubiquitination of monoubiquitinated protein, preventing polyubiquitination by STUB1/CHIP and its subsequent degradation.

The protein resides in the nucleus. Its subcellular location is the cytoplasm. The enzyme catalyses DNA(n) + a 2'-deoxyribonucleoside 5'-triphosphate = DNA(n+1) + diphosphate. The catalysed reaction is a 5'-end 2'-deoxyribose-2'-deoxyribonucleotide-DNA = (2E,4S)-4-hydroxypenten-2-al-5-phosphate + a 5'-end 5'-phospho-2'-deoxyribonucleoside-DNA + H(+). It carries out the reaction 2'-deoxyribonucleotide-(2'-deoxyribose 5'-phosphate)-2'-deoxyribonucleotide-DNA = a 3'-end 2'-deoxyribonucleotide-(2,3-dehydro-2,3-deoxyribose 5'-phosphate)-DNA + a 5'-end 5'-phospho-2'-deoxyribonucleoside-DNA + H(+). Repair polymerase that plays a key role in base-excision repair. During this process, the damaged base is excised by specific DNA glycosylases, the DNA backbone is nicked at the abasic site by an apurinic/apyrimidic (AP) endonuclease, and POLB removes 5'-deoxyribose-phosphate from the preincised AP site acting as a 5'-deoxyribose-phosphate lyase (5'-dRP lyase); through its DNA polymerase activity, it adds one nucleotide to the 3' end of the arising single-nucleotide gap. Conducts 'gap-filling' DNA synthesis in a stepwise distributive fashion rather than in a processive fashion as for other DNA polymerases. It is also able to cleave sugar-phosphate bonds 3' to an intact AP site, acting as an AP lyase. This chain is DNA polymerase beta (Polb), found in Rattus norvegicus (Rat).